The chain runs to 132 residues: MAGQTFLHRIGTDLVHIPRIEGMLERYGKQFLNRVYTEGEQHYCLASKPHRANRLAGRWAAKEAVTKALGTGWRGVGYRDIEVVRLASGEPTICLNGRAVLLVERFGRLDWQVSFSHDREYAVATVSVIGFF.

The Mg(2+) site is built by aspartate 13 and glutamate 63.

Belongs to the P-Pant transferase superfamily. AcpS family. Mg(2+) serves as cofactor.

It is found in the cytoplasm. It carries out the reaction apo-[ACP] + CoA = holo-[ACP] + adenosine 3',5'-bisphosphate + H(+). Its function is as follows. Transfers the 4'-phosphopantetheine moiety from coenzyme A to a Ser of acyl-carrier-protein. This chain is Holo-[acyl-carrier-protein] synthase, found in Gloeobacter violaceus (strain ATCC 29082 / PCC 7421).